The following is a 454-amino-acid chain: Pup--protein ligase (454 aa).

Residue glutamate 9 coordinates Mg(2+). Arginine 53 contacts ATP. Mg(2+) is bound at residue tyrosine 55. The Proton acceptor role is filled by aspartate 57. Residue glutamate 63 participates in Mg(2+) binding. ATP-binding residues include threonine 66 and tryptophan 421.

It belongs to the Pup ligase/Pup deamidase family. Pup-conjugating enzyme subfamily.

It carries out the reaction ATP + [prokaryotic ubiquitin-like protein]-L-glutamate + [protein]-L-lysine = ADP + phosphate + N(6)-([prokaryotic ubiquitin-like protein]-gamma-L-glutamyl)-[protein]-L-lysine.. It functions in the pathway protein degradation; proteasomal Pup-dependent pathway. The protein operates within protein modification; protein pupylation. In terms of biological role, catalyzes the covalent attachment of the prokaryotic ubiquitin-like protein modifier Pup to the proteasomal substrate proteins, thereby targeting them for proteasomal degradation. This tagging system is termed pupylation. The ligation reaction involves the side-chain carboxylate of the C-terminal glutamate of Pup and the side-chain amino group of a substrate lysine. In Frankia casuarinae (strain DSM 45818 / CECT 9043 / HFP020203 / CcI3), this protein is Pup--protein ligase.